Reading from the N-terminus, the 345-residue chain is Dihydroorotase (345 aa).

Residues histidine 13 and histidine 15 each contribute to the Zn(2+) site. Residues 15-17 (HFR) and asparagine 41 contribute to the substrate site. Zn(2+) contacts are provided by lysine 98, histidine 135, and histidine 173. An N6-carboxylysine modification is found at lysine 98. Histidine 135 contacts substrate. Residue leucine 218 coordinates substrate. Residue aspartate 246 coordinates Zn(2+). Aspartate 246 is a catalytic residue. Residues histidine 250 and alanine 262 each coordinate substrate.

This sequence belongs to the metallo-dependent hydrolases superfamily. DHOase family. Class II DHOase subfamily. Homodimer. The cofactor is Zn(2+).

The enzyme catalyses (S)-dihydroorotate + H2O = N-carbamoyl-L-aspartate + H(+). It functions in the pathway pyrimidine metabolism; UMP biosynthesis via de novo pathway; (S)-dihydroorotate from bicarbonate: step 3/3. Catalyzes the reversible cyclization of carbamoyl aspartate to dihydroorotate. This Shewanella piezotolerans (strain WP3 / JCM 13877) protein is Dihydroorotase.